A 56-amino-acid polypeptide reads, in one-letter code: UPF0434 protein ECH_0194 (56 aa).

Belongs to the UPF0434 family.

This Ehrlichia chaffeensis (strain ATCC CRL-10679 / Arkansas) protein is UPF0434 protein ECH_0194.